A 232-amino-acid chain; its full sequence is Biosynthetic peptidoglycan transglycosylase (232 aa).

Residues 12–31 (YLLWFMAASVVLVAVLRWVP) form a helical membrane-spanning segment.

It belongs to the glycosyltransferase 51 family.

Its subcellular location is the cell inner membrane. The catalysed reaction is [GlcNAc-(1-&gt;4)-Mur2Ac(oyl-L-Ala-gamma-D-Glu-L-Lys-D-Ala-D-Ala)](n)-di-trans,octa-cis-undecaprenyl diphosphate + beta-D-GlcNAc-(1-&gt;4)-Mur2Ac(oyl-L-Ala-gamma-D-Glu-L-Lys-D-Ala-D-Ala)-di-trans,octa-cis-undecaprenyl diphosphate = [GlcNAc-(1-&gt;4)-Mur2Ac(oyl-L-Ala-gamma-D-Glu-L-Lys-D-Ala-D-Ala)](n+1)-di-trans,octa-cis-undecaprenyl diphosphate + di-trans,octa-cis-undecaprenyl diphosphate + H(+). The protein operates within cell wall biogenesis; peptidoglycan biosynthesis. Peptidoglycan polymerase that catalyzes glycan chain elongation from lipid-linked precursors. In Pseudomonas aeruginosa (strain ATCC 15692 / DSM 22644 / CIP 104116 / JCM 14847 / LMG 12228 / 1C / PRS 101 / PAO1), this protein is Biosynthetic peptidoglycan transglycosylase.